The following is a 215-amino-acid chain: Large ribosomal subunit protein uL3 (215 aa).

A disordered region spans residues 136 to 155; that stretch reads GVSISHRSHGSTGQRQDPGK. Gln-151 bears the N5-methylglutamine mark.

The protein belongs to the universal ribosomal protein uL3 family. In terms of assembly, part of the 50S ribosomal subunit. Forms a cluster with proteins L14 and L19. In terms of processing, methylated by PrmB.

Its function is as follows. One of the primary rRNA binding proteins, it binds directly near the 3'-end of the 23S rRNA, where it nucleates assembly of the 50S subunit. The polypeptide is Large ribosomal subunit protein uL3 (Rickettsia rickettsii (strain Iowa)).